The chain runs to 209 residues: N-(5'-phosphoribosyl)anthranilate isomerase (209 aa).

The protein belongs to the TrpF family.

It catalyses the reaction N-(5-phospho-beta-D-ribosyl)anthranilate = 1-(2-carboxyphenylamino)-1-deoxy-D-ribulose 5-phosphate. Its pathway is amino-acid biosynthesis; L-tryptophan biosynthesis; L-tryptophan from chorismate: step 3/5. This is N-(5'-phosphoribosyl)anthranilate isomerase from Pelobacter propionicus (strain DSM 2379 / NBRC 103807 / OttBd1).